The chain runs to 1247 residues: Structural polyprotein (1247 aa).

Residues 52–103 are disordered; sequence ALRTVPQKPRRTRKTKKQKQVKQEQQSTRNQKKKAPKQKQTQKKKRPGRRER. Composition is skewed to basic residues over residues 59–71 and 81–100; these read KPRR…KQKQ and NQKK…RPGR. Residues 86–99 are ribosome-binding; it reads APKQKQTQKKKRPG. An intrachain disulfide couples Cys-112 to Cys-127. Residues 112 to 260 form the Peptidase S3 domain; it reads CIFEVKHEGK…KITPEGSVEW (149 aa). His-138 (charge relay system) is an active-site residue. An interaction with spike glycoprotein E2 region spans residues 154–159; sequence KRSSKY. Residues Asp-160 and Ser-212 each act as charge relay system in the active site. The interval 261–273 is functions as an uncleaved signal peptide for the precursor of protein E3/E2; that stretch reads SLALPVMCLLANT. 9 disulfides stabilise this stretch: Cys-268/Cys-277, Cys-282/Cys-286, Cys-285/Cys-317, Cys-343/Cys-449, Cys-346/Cys-352, Cys-415/Cys-429, Cys-477/Cys-590, Cys-525/Cys-549, and Cys-527/Cys-544. Asn-272 carries N-linked (GlcNAc...) asparagine; by host glycosylation. At 325–691 the chain is on the extracellular side; it reads NARENFNVYK…YYYELYPTTT (367 aa). N-linked (GlcNAc...) asparagine; by host glycosylation occurs at Asn-587. Residues 692–712 traverse the membrane as a helical segment; it reads IAVLAAASIVVASLVSLSLGM. The Cytoplasmic portion of the chain corresponds to 713 to 747; that stretch reads CICARRRCITPYELTPGATIPFLLGVLCCVKTAKA. An interaction with the capsid protein region spans residues 715–719; it reads CARRR. S-palmitoyl cysteine; by host attachment occurs at residues Cys-720, Cys-740, and Cys-741. Positions 720–740 are transient transmembrane before p62-6K protein processing; it reads CITPYELTPGATIPFLLGVLC. Cys-720 and Cys-741 are joined by a disulfide. At 748–762 the chain is on the extracellular side; it reads ASYYEAATYLWNEQQ. The chain crosses the membrane as a helical span at residues 763–783; the sequence is PLFWLQLLIPLSAAIVACNCL. The Cytoplasmic portion of the chain corresponds to 784-787; sequence KLLP. Residues 788–808 traverse the membrane as a helical segment; that stretch reads CCCKTLTFLAVMSIGARTVSA. Topologically, residues 809 to 1223 are extracellular; that stretch reads YEHATVIPNT…AMSWVQKITG (415 aa). 4 disulfide bridges follow: Cys-857-Cys-922, Cys-870-Cys-902, Cys-871-Cys-904, and Cys-876-Cys-886. The E1 fusion peptide loop stretch occupies residues 892–909; sequence VYPFMWGGAYCFCDAENT. 2 N-linked (GlcNAc...) asparagine; by host glycosylation sites follow: Asn-949 and Asn-1078. 4 disulfides stabilise this stretch: Cys-1067–Cys-1079, Cys-1109–Cys-1184, Cys-1114–Cys-1188, and Cys-1136–Cys-1178. A helical transmembrane segment spans residues 1224–1244; that stretch reads GVGLVVAIAALILIIVLCVSF. A lipid anchor (S-palmitoyl cysteine; by host) is attached at Cys-1241. Residues 1245 to 1247 lie on the Cytoplasmic side of the membrane; that stretch reads SRH.

In terms of assembly, homodimer. Homomultimer. Interacts with host karyopherin KPNA4; this interaction allows the nuclear import of the viral capsid protein. Interacts with spike glycoprotein E2. Interacts with host IRAK1; the interaction leads to inhibition of IRAK1-dependent signaling. As to quaternary structure, the precursor of protein E3/E2 and E1 form a heterodimer shortly after synthesis. The precursor of protein E3/E2 and E1 form a heterodimer shortly after synthesis. Processing of the precursor of protein E3/E2 into E2 and E3 results in a heterodimer of the spike glycoproteins E2 and E1. Spike at virion surface are constituted of three E2-E1 heterodimers. After target cell attachment and endocytosis, E1 change conformation to form homotrimers. Interacts with 6K protein. In terms of assembly, interacts with spike glycoprotein E1. Processing of the precursor of protein E3/E2 into E2 and E3 results in a heterodimer of the spike glycoproteins E2 and E1. Spike at virion surface are constituted of a trimer of E2-E1 heterodimers. Interacts with 6K protein. Interacts with host MXRA8; this interaction mediates virus entry. As to quaternary structure, oligomer. Interacts with spike glycoprotein E1. Interacts with spike glycoprotein E2. Structural polyprotein: Specific enzymatic cleavages in vivo yield mature proteins. Capsid protein is auto-cleaved during polyprotein translation, unmasking a signal peptide at the N-terminus of the precursor of E3/E2. The remaining polyprotein is then targeted to the host endoplasmic reticulum, where host signal peptidase cleaves it into pE2, 6K and E1 proteins. pE2 is further processed to mature E3 and E2 by host furin in trans-Golgi vesicle. Post-translationally, palmitoylated via thioester bonds. These palmitoylations may induce disruption of the C-terminus transmembrane. This would result in the reorientation of E2 C-terminus from lumenal to cytoplasmic side. In terms of processing, N-glycosylated. Palmitoylated via thioester bonds.

It localises to the virion. It is found in the host cytoplasm. Its subcellular location is the host cell membrane. The protein resides in the virion membrane. The protein localises to the host Golgi apparatus. It localises to the host trans-Golgi network. It is found in the host endoplasmic reticulum. It catalyses the reaction Autocatalytic release of the core protein from the N-terminus of the togavirus structural polyprotein by hydrolysis of a -Trp-|-Ser- bond.. Its function is as follows. Possesses a protease activity that results in its autocatalytic cleavage from the nascent structural protein. Following its self-cleavage, the capsid protein transiently associates with ribosomes, and within several minutes the protein binds to viral RNA and rapidly assembles into icosahedric core particles. The resulting nucleocapsid eventually associates with the cytoplasmic domain of the spike glycoprotein E2 at the cell membrane, leading to budding and formation of mature virions. In case of infection, new virions attach to target cells and after clathrin-mediated endocytosis their membrane fuses with the host endosomal membrane. This leads to the release of the nucleocapsid into the cytoplasm, followed by an uncoating event necessary for the genomic RNA to become accessible. The uncoating might be triggered by the interaction of capsid proteins with ribosomes. Binding of ribosomes would release the genomic RNA since the same region is genomic RNA-binding and ribosome-binding. In terms of biological role, provides the signal sequence for the translocation of the precursor of protein E3/E2 to the host endoplasmic reticulum. Mediates pH protection of spike glycoprotein E1 during the transport via the secretory pathway. Plays a role in viral attachment to target host cell, by binding to the cell receptor MXRA8. Synthesized as a p62 precursor which is processed by furin at the cell membrane just before virion budding, giving rise to E2-E1 heterodimer. The p62-E1 heterodimer is stable, whereas E2-E1 is unstable and dissociate at low pH. p62 is processed at the last step, presumably to avoid E1 fusion activation before its final export to cell surface. E2 C-terminus contains a transitory transmembrane that would be disrupted by palmitoylation, resulting in reorientation of the C-terminal tail from lumenal to cytoplasmic side. This step is critical since E2 C-terminus is involved in budding by interacting with capsid proteins. This release of E2 C-terminus in cytoplasm occurs lately in protein export, and precludes premature assembly of particles at the endoplasmic reticulum membrane. Functionally, acts as a viroporin that participates in virus glycoprotein processing and transport to the plasma membrane, cell permeabilization and budding of viral particles. Disrupts the calcium homeostasis of the cell, probably at the endoplasmic reticulum level. This leads to cytoplasmic calcium elevation. Because of its lipophilic properties, the 6K protein is postulated to influence the selection of lipids that interact with the transmembrane domains of the glycoproteins, which, in turn, affects the deformability of the bilayer required for the extreme curvature that occurs as budding proceeds. Present in low amount in virions, about 3% compared to viral glycoproteins. Its function is as follows. Class II viral fusion protein. Fusion activity is inactive as long as E1 is bound to E2 in mature virion. After virus attachment to target cell via host MXRA8 and endocytosis, acidification of the endosome induce dissociation of E1/E2 heterodimer and concomitant trimerization of the E1 subunits. This E1 trimer is fusion active, and promotes release of viral nucleocapsid in cytoplasm after endosome and viral membrane fusion. Efficient fusion requires the presence of cholesterol and sphingolipid in the target membrane. The polypeptide is Structural polyprotein (O'nyong-nyong virus (strain SG650) (ONNV)).